A 638-amino-acid polypeptide reads, in one-letter code: CTTNBP2 N-terminal-like protein (638 aa).

Residues 87–284 (MKQCKNMQER…KDLEAAQQHR (198 aa)) are a coiled coil. 4 disordered regions span residues 280-303 (AQQH…TATE), 360-430 (RELT…PCSS), 463-490 (RHKF…LSPT), and 514-621 (NQGP…CSPS). S285 carries the post-translational modification Phosphoserine. Polar residues predominate over residues 360–371 (RELTSDSSTENQ). Composition is skewed to low complexity over residues 401–430 (TMPS…PCSS) and 467–477 (QSQADQDQQAS). A phosphoserine mark is found at S481, S488, S522, S526, S559, S562, and S567. A compositionally biased stretch (polar residues) spans 514 to 528 (NQGPIKPVSPNSSPF). Phosphothreonine occurs at positions 569 and 589. Over residues 589 to 620 (TPSQSATTPVTKTHSQASSLAATEDLASSCSP) the composition is skewed to polar residues. The residue at position 591 (S591) is a Phosphoserine.

Interacts with CTTN/cortactin; this interaction may redistribute CTTN to stress fibers. May form homomers. Associates with the core of STRIPAK complexes composed of PP2A catalytic and scaffolding subunits, the striatins (PP2A regulatory subunits), the striatin-associated proteins MOB4, STRIP1 and STRIP2, PDCD10 and members of the STE20 kinases, such as STK24 and STK26. In terms of tissue distribution, predominantly expressed in skin, also detectable in spleen and lung (at protein level). Very low levels, if any, in brain (at protein level).

The protein localises to the cell projection. Its subcellular location is the lamellipodium. It localises to the cytoplasm. The protein resides in the cytoskeleton. It is found in the stress fiber. Regulates lamellipodial actin dynamics in a CTTN-dependent manner. Associates with core striatin-interacting phosphatase and kinase (STRIPAK) complex to form CTTNBP2NL-STRIPAK complexes. STRIPAK complexes have critical roles in protein (de)phosphorylation and are regulators of multiple signaling pathways including Hippo, MAPK, nuclear receptor and cytoskeleton remodeling. Different types of STRIPAK complexes are involved in a variety of biological processes such as cell growth, differentiation, apoptosis, metabolism and immune regulation. The protein is CTTNBP2 N-terminal-like protein (Cttnbp2nl) of Mus musculus (Mouse).